Reading from the N-terminus, the 337-residue chain is Glyceraldehyde-3-phosphate dehydrogenase (337 aa).

Residues 17-18, aspartate 39, lysine 83, and serine 125 contribute to the NAD(+) site; that span reads RI. Residues 156 to 158, threonine 187, arginine 202, 215 to 216, and arginine 238 each bind D-glyceraldehyde 3-phosphate; these read SCT and TG. The active-site Nucleophile is cysteine 157. Asparagine 319 is a binding site for NAD(+).

The protein belongs to the glyceraldehyde-3-phosphate dehydrogenase family. In terms of assembly, homotetramer.

It is found in the cytoplasm. It carries out the reaction D-glyceraldehyde 3-phosphate + phosphate + NAD(+) = (2R)-3-phospho-glyceroyl phosphate + NADH + H(+). It functions in the pathway carbohydrate degradation; glycolysis; pyruvate from D-glyceraldehyde 3-phosphate: step 1/5. Catalyzes the oxidative phosphorylation of glyceraldehyde 3-phosphate (G3P) to 1,3-bisphosphoglycerate (BPG) using the cofactor NAD. The first reaction step involves the formation of a hemiacetal intermediate between G3P and a cysteine residue, and this hemiacetal intermediate is then oxidized to a thioester, with concomitant reduction of NAD to NADH. The reduced NADH is then exchanged with the second NAD, and the thioester is attacked by a nucleophilic inorganic phosphate to produce BPG. This Mycoplasma pneumoniae (strain ATCC 29342 / M129 / Subtype 1) (Mycoplasmoides pneumoniae) protein is Glyceraldehyde-3-phosphate dehydrogenase (gapA).